A 261-amino-acid polypeptide reads, in one-letter code: Undecaprenyl-diphosphatase (261 aa).

Helical transmembrane passes span 16–36, 40–60, 82–102, 107–127, 140–160, 183–203, 211–231, and 239–259; these read TEFL…LFGF, GLVF…VYFW, FWFL…LEDI, LRAP…LYLA, IRFG…IPGV, FSFL…MLKM, SFVL…WFLI, and FNIF…IALL.

It belongs to the UppP family.

It localises to the cell membrane. It carries out the reaction di-trans,octa-cis-undecaprenyl diphosphate + H2O = di-trans,octa-cis-undecaprenyl phosphate + phosphate + H(+). Catalyzes the dephosphorylation of undecaprenyl diphosphate (UPP). Confers resistance to bacitracin. The protein is Undecaprenyl-diphosphatase of Desulforudis audaxviator (strain MP104C).